Consider the following 448-residue polypeptide: Probable glycine dehydrogenase (decarboxylating) subunit 1 (448 aa).

It belongs to the GcvP family. N-terminal subunit subfamily. In terms of assembly, the glycine cleavage system is composed of four proteins: P, T, L and H. In this organism, the P 'protein' is a heterodimer of two subunits.

It catalyses the reaction N(6)-[(R)-lipoyl]-L-lysyl-[glycine-cleavage complex H protein] + glycine + H(+) = N(6)-[(R)-S(8)-aminomethyldihydrolipoyl]-L-lysyl-[glycine-cleavage complex H protein] + CO2. The glycine cleavage system catalyzes the degradation of glycine. The P protein binds the alpha-amino group of glycine through its pyridoxal phosphate cofactor; CO(2) is released and the remaining methylamine moiety is then transferred to the lipoamide cofactor of the H protein. The polypeptide is Probable glycine dehydrogenase (decarboxylating) subunit 1 (Bacillus pumilus (strain SAFR-032)).